We begin with the raw amino-acid sequence, 448 residues long: Phosphoglucosamine mutase (448 aa).

Ser100 serves as the catalytic Phosphoserine intermediate. Positions 100, 240, 242, and 244 each coordinate Mg(2+). Residue Ser100 is modified to Phosphoserine.

The protein belongs to the phosphohexose mutase family. Requires Mg(2+) as cofactor. In terms of processing, activated by phosphorylation.

The enzyme catalyses alpha-D-glucosamine 1-phosphate = D-glucosamine 6-phosphate. In terms of biological role, catalyzes the conversion of glucosamine-6-phosphate to glucosamine-1-phosphate. The polypeptide is Phosphoglucosamine mutase (Bacillus mycoides (strain KBAB4) (Bacillus weihenstephanensis)).